We begin with the raw amino-acid sequence, 37 residues long: Photosystem II reaction center protein T (37 aa).

A helical transmembrane segment spans residues 3-23 (ALVYTFLLVGTLGIIFFAIFF).

The protein belongs to the PsbT family. PSII is composed of 1 copy each of membrane proteins PsbA, PsbB, PsbC, PsbD, PsbE, PsbF, PsbH, PsbI, PsbJ, PsbK, PsbL, PsbM, PsbT, PsbY, PsbZ, Psb30/Ycf12, at least 3 peripheral proteins of the oxygen-evolving complex and a large number of cofactors. It forms dimeric complexes.

Its subcellular location is the plastid. It localises to the chloroplast thylakoid membrane. In terms of biological role, found at the monomer-monomer interface of the photosystem II (PS II) dimer, plays a role in assembly and dimerization of PSII. PSII is a light-driven water plastoquinone oxidoreductase, using light energy to abstract electrons from H(2)O, generating a proton gradient subsequently used for ATP formation. This chain is Photosystem II reaction center protein T, found in Spirogyra maxima (Green alga).